Reading from the N-terminus, the 955-residue chain is Beta-agarase B (955 aa).

The protein belongs to the glycosyl hydrolase 50 family.

The catalysed reaction is Hydrolysis of (1-&gt;4)-beta-D-galactosidic linkages in agarose, giving the tetramer as the predominant product.. In terms of biological role, hydrolyzes agarose to yield predominantly neoagarotetraose and neoagarohexaose. The chain is Beta-agarase B (agaB) from Vibrio sp. (strain JT0107).